We begin with the raw amino-acid sequence, 325 residues long: MSDSTIRTYSSDQRQTDNDETVSTPDEDVLTCPECGGQVIDDEEHGESVCVDCGLVVEENGIDRGPEWRAFNSTEKDEKSRVGAPTTNMMHDKGLSTNIGWQDKDAYGNSLSSNQRQKMQRLRKWNERFRTRNSKERNLKQALGEIERMASALGLPKEVRETASVIYRRALSEDLLPGRSIEGVATAALYASARQLSTPRSIDEVANVSRIDEMEFKRTYRYIVRELSLEVAPADPAQYVPRFASDLDLPDEVERRSRELISNAQADGVTSGKSPVGLAAAAIYASSLLTNHKVTQSEVSEVTDVSEVTIRNRYQELLEATEAAA.

The segment covering 1–13 (MSDSTIRTYSSDQ) has biased composition (polar residues). Residues 1 to 29 (MSDSTIRTYSSDQRQTDNDETVSTPDEDV) are disordered. The TFIIB-type zinc-finger motif lies at 28 to 58 (DVLTCPECGGQVIDDEEHGESVCVDCGLVVE). Zn(2+)-binding residues include Cys32, Cys35, Cys50, and Cys53. The segment at 73-93 (STEKDEKSRVGAPTTNMMHDK) is disordered. A run of 2 repeats spans residues 144 to 227 (GEIE…VREL) and 238 to 319 (QYVP…ELLE).

It belongs to the TFIIB family.

In terms of biological role, stabilizes TBP binding to an archaeal box-A promoter. Also responsible for recruiting RNA polymerase II to the pre-initiation complex (DNA-TBP-TFIIB). The chain is Transcription initiation factor IIB 2 from Halobacterium salinarum (strain ATCC 700922 / JCM 11081 / NRC-1) (Halobacterium halobium).